Reading from the N-terminus, the 290-residue chain is Acetyl-coenzyme A carboxylase carboxyl transferase subunit beta (290 aa).

A CoA carboxyltransferase N-terminal domain is found at 28 to 290; the sequence is LMNKCSKCGT…TVREGLSHGG (263 aa). Positions 32, 35, 51, and 54 each coordinate Zn(2+). A C4-type zinc finger spans residues 32–54; it reads CSKCGTIQYSKELDKNLKVCSSC.

It belongs to the AccD/PCCB family. In terms of assembly, acetyl-CoA carboxylase is a heterohexamer composed of biotin carboxyl carrier protein (AccB), biotin carboxylase (AccC) and two subunits each of ACCase subunit alpha (AccA) and ACCase subunit beta (AccD). It depends on Zn(2+) as a cofactor.

It localises to the cytoplasm. The catalysed reaction is N(6)-carboxybiotinyl-L-lysyl-[protein] + acetyl-CoA = N(6)-biotinyl-L-lysyl-[protein] + malonyl-CoA. It participates in lipid metabolism; malonyl-CoA biosynthesis; malonyl-CoA from acetyl-CoA: step 1/1. Component of the acetyl coenzyme A carboxylase (ACC) complex. Biotin carboxylase (BC) catalyzes the carboxylation of biotin on its carrier protein (BCCP) and then the CO(2) group is transferred by the transcarboxylase to acetyl-CoA to form malonyl-CoA. In Paenibacillus sp. (strain JDR-2), this protein is Acetyl-coenzyme A carboxylase carboxyl transferase subunit beta.